Here is a 1790-residue protein sequence, read N- to C-terminus: Intracellular protein transport protein USO1 (1790 aa).

The globular head stretch occupies residues 1–724; sequence MDIIQGLIQQ…LSHDPDEEPI (724 aa). ARM repeat units follow at residues 45-89, 127-170, 173-213, 215-260, 261-312, 314-362, 363-429, 431-512, 543-584, and 586-630; these read AFSR…LFIR, QFSL…AVMA, PLKA…MAVV, DSPH…NILK, YNTS…VSLT, EPGN…NMVR, SNEH…LKAY, MDNF…PFKL, GNDL…LIYW, and FGDF…LGVA. The segment at 452–484 is disordered; the sequence is TNNVGDNAKENGGSNKSDKESDSDKDTDGKDGT. The interval 465-487 is charged (hyper-hydrophilic); sequence SNKSDKESDSDKDTDGKDGTEYE. A compositionally biased stretch (basic and acidic residues) spans 467 to 484; it reads KSDKESDSDKDTDGKDGT. Positions 725–1790 form a coiled coil; the sequence is NKISFEEVEK…EEDEEEGQVA (1066 aa). A dispensable for the protein function region spans residues 991–1790; that stretch reads ESSIQLSNLQ…EEDEEEGQVA (800 aa). 6 disordered regions span residues 1185 to 1221, 1326 to 1351, 1485 to 1547, 1645 to 1667, 1722 to 1742, and 1762 to 1790; these read EITS…SNLK, KEKS…EEQL, GLKK…EDIK, QELD…EVRK, DNLK…SEID, and LKDL…GQVA. Residues 1194–1209 show a composition bias toward basic and acidic residues; the sequence is ESIKKKNDELEGEVKA. 4 stretches are compositionally biased toward basic and acidic residues: residues 1485–1512, 1519–1547, 1655–1667, and 1722–1738; these read GLKK…KLES, TELK…EDIK, QKSE…EVRK, and DNLK…NEDR. S1770 is subject to Phosphoserine. The span at 1770–1790 shows a compositional bias: acidic residues; sequence SSDEEDDEEDDEEDEEEGQVA.

The protein belongs to the VDP/USO1/EDE1 family. Homodimer. Dimerizes by parallel association of the tails, resulting in an elongated structure with two globular head domains side by side, and a long rod-like tail structure.

The protein localises to the cytoplasm. The protein resides in the cytoskeleton. It is found in the cytoplasmic vesicle membrane. It localises to the endoplasmic reticulum membrane. Its subcellular location is the golgi apparatus membrane. Its function is as follows. Required for protein transport from the ER to the Golgi complex. This Saccharomyces cerevisiae (strain ATCC 204508 / S288c) (Baker's yeast) protein is Intracellular protein transport protein USO1 (USO1).